Here is a 599-residue protein sequence, read N- to C-terminus: Thiamine transporter THI72 (599 aa).

The next 11 helical transmembrane spans lie at 42–62 (WGFW…GMWI), 78–98 (IGAF…NSCP), 112–132 (FVFG…MSIV), 174–194 (LIGF…KPYH), 197–217 (YILI…VIYL), 280–300 (IVAL…GASA), 333–353 (FFCG…NCGF), 372–392 (GAIF…YNSS), 395–415 (FLTV…VMIC), 447–467 (AIVA…WEVN), and 484–504 (SFFS…LFPF). The segment at 553 to 599 (HEYKPESSDDELPELTKTSSENTKVFEIVHQKDNEKESSTSSEKQIA) is disordered. A phosphoserine mark is found at Ser-560 and Ser-572. Residues 579–590 (EIVHQKDNEKES) show a composition bias toward basic and acidic residues.

The protein belongs to the purine-cytosine permease (2.A.39) family.

It localises to the membrane. Low affinity thiamine transporter responsible for intake of thiamine. It is possible that the primary function is the uptake of closely related compounds and that thiamine transport is a secondary activity of these proteins. The chain is Thiamine transporter THI72 (THI72) from Saccharomyces cerevisiae (strain ATCC 204508 / S288c) (Baker's yeast).